A 330-amino-acid polypeptide reads, in one-letter code: Ketol-acid reductoisomerase (NADP(+)) (330 aa).

Residues 1–181 (MNVYYEQDAD…GGTKAGVIET (181 aa)) enclose the KARI N-terminal Rossmann domain. NADP(+)-binding positions include 24–27 (YGSQ), R47, S50, S52, and 82–85 (DQNQ). The active site involves H107. G133 is a binding site for NADP(+). Positions 182–327 (SIKNETETDL…AKLRDMMSWL (146 aa)) constitute a KARI C-terminal knotted domain. Residues D190, E194, E226, and E230 each coordinate Mg(2+). Residue S251 coordinates substrate.

Belongs to the ketol-acid reductoisomerase family. The cofactor is Mg(2+).

It catalyses the reaction (2R)-2,3-dihydroxy-3-methylbutanoate + NADP(+) = (2S)-2-acetolactate + NADPH + H(+). The enzyme catalyses (2R,3R)-2,3-dihydroxy-3-methylpentanoate + NADP(+) = (S)-2-ethyl-2-hydroxy-3-oxobutanoate + NADPH + H(+). Its pathway is amino-acid biosynthesis; L-isoleucine biosynthesis; L-isoleucine from 2-oxobutanoate: step 2/4. The protein operates within amino-acid biosynthesis; L-valine biosynthesis; L-valine from pyruvate: step 2/4. Involved in the biosynthesis of branched-chain amino acids (BCAA). Catalyzes an alkyl-migration followed by a ketol-acid reduction of (S)-2-acetolactate (S2AL) to yield (R)-2,3-dihydroxy-isovalerate. In the isomerase reaction, S2AL is rearranged via a Mg-dependent methyl migration to produce 3-hydroxy-3-methyl-2-ketobutyrate (HMKB). In the reductase reaction, this 2-ketoacid undergoes a metal-dependent reduction by NADPH to yield (R)-2,3-dihydroxy-isovalerate. The sequence is that of Ketol-acid reductoisomerase (NADP(+)) from Pelodictyon phaeoclathratiforme (strain DSM 5477 / BU-1).